Consider the following 291-residue polypeptide: Ribosomal RNA small subunit methyltransferase H (291 aa).

S-adenosyl-L-methionine contacts are provided by residues 36–38 (GGH), aspartate 55, leucine 88, aspartate 102, and glutamine 109. Residues 268–291 (KPTQEETKNNPRARSAKLRVAERI) are disordered.

The protein belongs to the methyltransferase superfamily. RsmH family.

The protein resides in the cytoplasm. The catalysed reaction is cytidine(1402) in 16S rRNA + S-adenosyl-L-methionine = N(4)-methylcytidine(1402) in 16S rRNA + S-adenosyl-L-homocysteine + H(+). In terms of biological role, specifically methylates the N4 position of cytidine in position 1402 (C1402) of 16S rRNA. The chain is Ribosomal RNA small subunit methyltransferase H from Thermosipho melanesiensis (strain DSM 12029 / CIP 104789 / BI429).